Reading from the N-terminus, the 386-residue chain is S-adenosylmethionine synthase (386 aa).

Position 16 (histidine 16) interacts with ATP. Position 18 (aspartate 18) interacts with Mg(2+). Glutamate 44 provides a ligand contact to K(+). 2 residues coordinate L-methionine: glutamate 57 and glutamine 100. The segment at 100–110 (QSSDIAQGVDR) is flexible loop. ATP is bound by residues 165 to 167 (DAK), aspartate 240, 246 to 247 (RK), alanine 263, and lysine 267. Residue aspartate 240 coordinates L-methionine. Lysine 271 contacts L-methionine.

It belongs to the AdoMet synthase family. As to quaternary structure, homotetramer; dimer of dimers. The cofactor is Mg(2+). K(+) is required as a cofactor.

It is found in the cytoplasm. It carries out the reaction L-methionine + ATP + H2O = S-adenosyl-L-methionine + phosphate + diphosphate. Its pathway is amino-acid biosynthesis; S-adenosyl-L-methionine biosynthesis; S-adenosyl-L-methionine from L-methionine: step 1/1. Catalyzes the formation of S-adenosylmethionine (AdoMet) from methionine and ATP. The overall synthetic reaction is composed of two sequential steps, AdoMet formation and the subsequent tripolyphosphate hydrolysis which occurs prior to release of AdoMet from the enzyme. In Francisella philomiragia subsp. philomiragia (strain ATCC 25017 / CCUG 19701 / FSC 153 / O#319-036), this protein is S-adenosylmethionine synthase.